The sequence spans 23 residues: PAWLVDCPCVGDDVNRLLTRGER.

A propeptide is located at residue Pro1. The segment at residues 2-8 is a cross-link (cyclopeptide (Ala-Pro)); it reads AWLVDCP. The segment at residues 3-7 is a cross-link (2'-cysteinyl-6'-hydroxytryptophan sulfoxide (Trp-Cys)); sequence WLVDC. Residues 9–23 constitute a propeptide that is removed on maturation; sequence CVGDDVNRLLTRGER.

This sequence belongs to the MSDIN fungal toxin family. In terms of processing, processed by the macrocyclase-peptidase enzyme POPB to yield a toxic cyclic heptapeptide. POPB first removes 10 residues from the N-terminus. Conformational trapping of the remaining peptide forces the enzyme to release this intermediate rather than proceed to macrocyclization. The enzyme rebinds the remaining peptide in a different conformation and catalyzes macrocyclization of the N-terminal 7 residues.

Its function is as follows. Toxin that belongs to the bicyclic heptapeptides called phallotoxins. Although structurally related to amatoxins, phallotoxins have a different mode of action, which is the stabilization of F-actin. Phallotoxins are poisonous when administered parenterally, but not orally because of poor absorption. In Amanita exitialis (Guangzhou destroying angel), this protein is Phallacidin proprotein 1.